We begin with the raw amino-acid sequence, 229 residues long: Large ribosomal subunit protein uL1c (229 aa).

The protein belongs to the universal ribosomal protein uL1 family. Part of the 50S ribosomal subunit.

The protein localises to the plastid. Its subcellular location is the chloroplast. Its function is as follows. Binds directly to 23S rRNA. Might be involved in E site tRNA release (Potential). This Porphyra purpurea (Red seaweed) protein is Large ribosomal subunit protein uL1c (rpl1).